The chain runs to 127 residues: DNA-directed RNA polymerase subunit omega (127 aa).

This sequence belongs to the RNA polymerase subunit omega family. The RNAP catalytic core consists of 2 alpha, 1 beta, 1 beta' and 1 omega subunit. When a sigma factor is associated with the core the holoenzyme is formed, which can initiate transcription.

It catalyses the reaction RNA(n) + a ribonucleoside 5'-triphosphate = RNA(n+1) + diphosphate. Promotes RNA polymerase assembly. Latches the N- and C-terminal regions of the beta' subunit thereby facilitating its interaction with the beta and alpha subunits. The chain is DNA-directed RNA polymerase subunit omega from Rickettsia canadensis (strain McKiel).